Reading from the N-terminus, the 362-residue chain is tRNA/tmRNA (uracil-C(5))-methyltransferase (362 aa).

S-adenosyl-L-methionine-binding residues include glutamine 186, tyrosine 214, asparagine 219, glutamate 235, and aspartate 295. Cysteine 320 serves as the catalytic Nucleophile. Glutamate 354 functions as the Proton acceptor in the catalytic mechanism.

It belongs to the class I-like SAM-binding methyltransferase superfamily. RNA M5U methyltransferase family. TrmA subfamily.

It carries out the reaction uridine(54) in tRNA + S-adenosyl-L-methionine = 5-methyluridine(54) in tRNA + S-adenosyl-L-homocysteine + H(+). The catalysed reaction is uridine(341) in tmRNA + S-adenosyl-L-methionine = 5-methyluridine(341) in tmRNA + S-adenosyl-L-homocysteine + H(+). Functionally, dual-specificity methyltransferase that catalyzes the formation of 5-methyluridine at position 54 (m5U54) in all tRNAs, and that of position 341 (m5U341) in tmRNA (transfer-mRNA). The chain is tRNA/tmRNA (uracil-C(5))-methyltransferase from Dechloromonas aromatica (strain RCB).